A 140-amino-acid polypeptide reads, in one-letter code: Nucleoside diphosphate kinase (140 aa).

The ATP site is built by Lys-11, Phe-59, Arg-87, Thr-93, Arg-104, and Asn-114. Catalysis depends on His-117, which acts as the Pros-phosphohistidine intermediate.

This sequence belongs to the NDK family. As to quaternary structure, homotetramer. Mg(2+) is required as a cofactor.

The protein localises to the cytoplasm. It catalyses the reaction a 2'-deoxyribonucleoside 5'-diphosphate + ATP = a 2'-deoxyribonucleoside 5'-triphosphate + ADP. It carries out the reaction a ribonucleoside 5'-diphosphate + ATP = a ribonucleoside 5'-triphosphate + ADP. Functionally, major role in the synthesis of nucleoside triphosphates other than ATP. The ATP gamma phosphate is transferred to the NDP beta phosphate via a ping-pong mechanism, using a phosphorylated active-site intermediate. In Francisella philomiragia subsp. philomiragia (strain ATCC 25017 / CCUG 19701 / FSC 153 / O#319-036), this protein is Nucleoside diphosphate kinase.